A 201-amino-acid polypeptide reads, in one-letter code: Large ribosomal subunit protein bL25 (201 aa).

It belongs to the bacterial ribosomal protein bL25 family. CTC subfamily. In terms of assembly, part of the 50S ribosomal subunit; part of the 5S rRNA/L5/L18/L25 subcomplex. Contacts the 5S rRNA. Binds to the 5S rRNA independently of L5 and L18.

Its function is as follows. This is one of the proteins that binds to the 5S RNA in the ribosome where it forms part of the central protuberance. This is Large ribosomal subunit protein bL25 from Thiobacillus denitrificans (strain ATCC 25259 / T1).